Here is a 257-residue protein sequence, read N- to C-terminus: 5-oxoprolinase subunit A (257 aa).

The protein belongs to the LamB/PxpA family. In terms of assembly, forms a complex composed of PxpA, PxpB and PxpC.

It catalyses the reaction 5-oxo-L-proline + ATP + 2 H2O = L-glutamate + ADP + phosphate + H(+). Its function is as follows. Catalyzes the cleavage of 5-oxoproline to form L-glutamate coupled to the hydrolysis of ATP to ADP and inorganic phosphate. This chain is 5-oxoprolinase subunit A, found in Fusobacterium nucleatum subsp. nucleatum (strain ATCC 25586 / DSM 15643 / BCRC 10681 / CIP 101130 / JCM 8532 / KCTC 2640 / LMG 13131 / VPI 4355).